Reading from the N-terminus, the 283-residue chain is Pantothenate synthetase (283 aa).

26–33 (MGNLHEGH) lines the ATP pocket. The active-site Proton donor is His-33. Gln-57 contacts (R)-pantoate. Gln-57 lines the beta-alanine pocket. 148–151 (GKKD) is a binding site for ATP. Gln-154 lines the (R)-pantoate pocket. An ATP-binding site is contributed by 185–188 (LSSR).

The protein belongs to the pantothenate synthetase family. In terms of assembly, homodimer.

Its subcellular location is the cytoplasm. It catalyses the reaction (R)-pantoate + beta-alanine + ATP = (R)-pantothenate + AMP + diphosphate + H(+). It participates in cofactor biosynthesis; (R)-pantothenate biosynthesis; (R)-pantothenate from (R)-pantoate and beta-alanine: step 1/1. In terms of biological role, catalyzes the condensation of pantoate with beta-alanine in an ATP-dependent reaction via a pantoyl-adenylate intermediate. The polypeptide is Pantothenate synthetase (Polaromonas naphthalenivorans (strain CJ2)).